The primary structure comprises 636 residues: DNA ligase (636 aa).

Catalysis depends on Lys-113, which acts as the N6-AMP-lysine intermediate. The BRCT domain maps to Asn-560–Lys-636.

This sequence belongs to the NAD-dependent DNA ligase family.

It carries out the reaction NAD(+) + (deoxyribonucleotide)n-3'-hydroxyl + 5'-phospho-(deoxyribonucleotide)m = (deoxyribonucleotide)n+m + AMP + beta-nicotinamide D-nucleotide.. Its function is as follows. Catalyzes the formation of phosphodiester linkages between 5'-phosphoryl and 3'-hydroxyl groups in double-stranded DNA using NAD as a coenzyme and as the energy source for the reaction. The polypeptide is DNA ligase (Acanthamoeba polyphaga (Amoeba)).